Reading from the N-terminus, the 336-residue chain is G patch domain and ankyrin repeat-containing protein 1 homolog (336 aa).

ANK repeat units lie at residues 123-152 and 156-185; these read FGWT…QVET and SGNT…LEET. One can recognise a G-patch domain in the interval 240-286; that stretch reads AKNRGLQLMVKQGWDQEHGLGPSQSGRLYPVKTVLRKQRTGLGIEQQ.

The chain is G patch domain and ankyrin repeat-containing protein 1 homolog from Drosophila melanogaster (Fruit fly).